An 810-amino-acid polypeptide reads, in one-letter code: DNA gyrase subunit A (810 aa).

Residues 36–502 (LPDVRDGLKP…EVLKTSMSDL (467 aa)) enclose the Topo IIA-type catalytic domain. Tyr124 serves as the catalytic O-(5'-phospho-DNA)-tyrosine intermediate. The short motif at 529–535 (QGIGGKG) is the GyrA-box element.

The protein belongs to the type II topoisomerase GyrA/ParC subunit family. As to quaternary structure, heterotetramer, composed of two GyrA and two GyrB chains. In the heterotetramer, GyrA contains the active site tyrosine that forms a transient covalent intermediate with DNA, while GyrB binds cofactors and catalyzes ATP hydrolysis.

It is found in the cytoplasm. The catalysed reaction is ATP-dependent breakage, passage and rejoining of double-stranded DNA.. Its function is as follows. A type II topoisomerase that negatively supercoils closed circular double-stranded (ds) DNA in an ATP-dependent manner to modulate DNA topology and maintain chromosomes in an underwound state. Negative supercoiling favors strand separation, and DNA replication, transcription, recombination and repair, all of which involve strand separation. Also able to catalyze the interconversion of other topological isomers of dsDNA rings, including catenanes and knotted rings. Type II topoisomerases break and join 2 DNA strands simultaneously in an ATP-dependent manner. This chain is DNA gyrase subunit A, found in Borrelia hermsii (strain HS1 / DAH).